Here is a 295-residue protein sequence, read N- to C-terminus: uncharacterized protein (295 aa).

A signal peptide spans 1–19; the sequence is MFKKYIFILILFIASIARA. Residues 275-295 are disordered; the sequence is RNNPPLKNNNAKGKNPYDTNK. Residues 276–295 show a composition bias toward low complexity; the sequence is NNPPLKNNNAKGKNPYDTNK.

This is an uncharacterized protein from Rickettsia conorii (strain ATCC VR-613 / Malish 7).